Reading from the N-terminus, the 663-residue chain is Zyxin (663 aa).

Residues 35–438 (PPKPKINPFK…QQDQTLGSQG (404 aa)) are disordered. Pro residues-rich tracts occupy residues 122–148 (FPPPPPPEFSEPFPPPIEEFFPSPPPL) and 160–211 (VPVP…PPSV). Polar residues predominate over residues 298 to 314 (PQKTTEPPAEASQSSPK). 2 stretches are compositionally biased toward basic and acidic residues: residues 342–353 (QRERPRVLEKPR) and 360–375 (EPEHEPTVEVQVERTR). Polar residues-rich tracts occupy residues 377–393 (LGPQTESGRSPGAQSTG) and 427–438 (TGQQDQTLGSQG). LIM zinc-binding domains lie at 470-531 (ELCG…TLEC), 532-589 (CAVC…RRYA), and 590-660 (PRCC…RARA).

Belongs to the zyxin/ajuba family. As to quaternary structure, interacts (via LIM2 domain) with hesx1/anf1. At the early gastrula stage, expressed at a low level in the animal hemisphere. Expression rises by the end of gastrulation in the anterior part of the embryo, where it gradually increases by the midneurula stage. During neurulation, expression continues most intensively in the anterior part of the neural plate and around it. At later stages, intensely expressed in the brain and at lower levels in the spinal cord, eyes, nasal placodes, within somites, and around the cement gland.

It is found in the cytoplasm. The protein resides in the cytoskeleton. It localises to the cell junction. Its subcellular location is the focal adhesion. In terms of biological role, adhesion plaque protein. May be a component of a signal transduction pathway that mediates adhesion-stimulated changes in gene expression. Suppresses the transcription-repressing activity of hesx1/anf1. This is Zyxin from Xenopus laevis (African clawed frog).